The following is a 424-amino-acid chain: Sulfatase ppz1 (424 aa).

Ca(2+)-binding residues include Asp-13, Asp-203, and Asn-204.

It belongs to the sulfatase family. The cofactor is Ca(2+).

Sulfatase; part of the gene cluster that mediates the biosynthesis of pyrrolopyrazines, secondary metabolites showing insecticidal activity. The role of ppz1 within the pathway has still to be determined. The single multifunctional NRPS ppzA is sufficient to produce peramine via condensation of 1-pyrroline-5-carboxylate and arginine, N-methylation of the alpha-amino group of arginine and reduction of the thioester and the cyclization to form an iminium ion resulting in release from the peptide synthetase. Deprotonation of this intermediate and oxidation of the pyrroline ring would give rise to peramine. In Epichloe species that produce only peramine, the peramine synthetase gene is not localized in a gene cluster, in contrast to Metarhizium species that contain additional pyrrolopyrazine biosynthesis genes. The 2-oxoglutarate-Fe(II) type oxidoreductase ppzC hydroxylates peramine to yield the newly identified compound 8-hydroxyperamine whereas ppzD converts L-proline into trans-4-hydroxy-L-proline, a precursor of peramine biosynthesis. This chain is Sulfatase ppz1, found in Metarhizium majus (strain ARSEF 297).